The primary structure comprises 407 residues: 4-hydroxy-3-methylbut-2-en-1-yl diphosphate synthase (flavodoxin) (407 aa).

The [4Fe-4S] cluster site is built by cysteine 296, cysteine 299, cysteine 342, and glutamate 349.

This sequence belongs to the IspG family. [4Fe-4S] cluster serves as cofactor.

The catalysed reaction is (2E)-4-hydroxy-3-methylbut-2-enyl diphosphate + oxidized [flavodoxin] + H2O + 2 H(+) = 2-C-methyl-D-erythritol 2,4-cyclic diphosphate + reduced [flavodoxin]. The protein operates within isoprenoid biosynthesis; isopentenyl diphosphate biosynthesis via DXP pathway; isopentenyl diphosphate from 1-deoxy-D-xylulose 5-phosphate: step 5/6. Its function is as follows. Converts 2C-methyl-D-erythritol 2,4-cyclodiphosphate (ME-2,4cPP) into 1-hydroxy-2-methyl-2-(E)-butenyl 4-diphosphate. The polypeptide is 4-hydroxy-3-methylbut-2-en-1-yl diphosphate synthase (flavodoxin) (Methylococcus capsulatus (strain ATCC 33009 / NCIMB 11132 / Bath)).